The following is a 217-amino-acid chain: Ribonuclease HII (217 aa).

The 190-residue stretch at 12–201 (DLVAGVDEVG…VRTAHEARAA (190 aa)) folds into the RNase H type-2 domain. Residues Asp18, Glu19, and Asp110 each coordinate a divalent metal cation.

The protein belongs to the RNase HII family. Requires Mn(2+) as cofactor. It depends on Mg(2+) as a cofactor.

It is found in the cytoplasm. It catalyses the reaction Endonucleolytic cleavage to 5'-phosphomonoester.. In terms of biological role, endonuclease that specifically degrades the RNA of RNA-DNA hybrids. The sequence is that of Ribonuclease HII from Pseudomonas syringae pv. tomato (strain ATCC BAA-871 / DC3000).